We begin with the raw amino-acid sequence, 378 residues long: Alpha-D-ribose 1-methylphosphonate 5-triphosphate diphosphatase (378 aa).

It belongs to the metallo-dependent hydrolases superfamily.

The catalysed reaction is alpha-D-ribose 1-methylphosphonate 5-triphosphate + H2O = alpha-D-ribose 1-methylphosphonate 5-phosphate + diphosphate + H(+). In terms of biological role, catalyzes the hydrolysis of alpha-D-ribose 1-methylphosphonate triphosphate (RPnTP) to form alpha-D-ribose 1-methylphosphonate phosphate (PRPn) and diphosphate. This is Alpha-D-ribose 1-methylphosphonate 5-triphosphate diphosphatase (phnM) from Escherichia coli (strain K12).